The sequence spans 261 residues: Proline-rich protein HaeIII subfamily 1 (261 aa).

An N-terminal signal peptide occupies residues 1 to 15 (MLVVLFTVALLALSS). The tract at residues 15–261 (SAQGPREENQ…PPQGRPQGPR (247 aa)) is disordered. 2 stretches are compositionally biased toward pro residues: residues 32–44 (QRPPPSGFQPRPP) and 51–237 (GPPP…PPTG). Residues 238-261 (GPQQTPPLAGNTQGPPQGRPQGPR) show a composition bias toward low complexity.

It is found in the secreted. The chain is Proline-rich protein HaeIII subfamily 1 (Prh1) from Mus musculus (Mouse).